A 452-amino-acid polypeptide reads, in one-letter code: NADH-ubiquinone oxidoreductase chain 4 (452 aa).

A run of 14 helical transmembrane segments spans residues Leu4–Trp24, Val29–Ser49, Phe59–Ser79, Leu88–Met110, Leu114–Gly136, Ala144–Ile164, Val182–Val202, Pro221–Met241, Met252–Ile272, Leu282–Trp304, Ala309–Tyr331, Leu345–Ala365, Ile390–Met410, and Leu432–Phe452.

Belongs to the complex I subunit 4 family.

It is found in the mitochondrion membrane. The catalysed reaction is a ubiquinone + NADH + 5 H(+)(in) = a ubiquinol + NAD(+) + 4 H(+)(out). Its function is as follows. Core subunit of the mitochondrial membrane respiratory chain NADH dehydrogenase (Complex I) that is believed to belong to the minimal assembly required for catalysis. Complex I functions in the transfer of electrons from NADH to the respiratory chain. The immediate electron acceptor for the enzyme is believed to be ubiquinone. This Branchiostoma lanceolatum (Common lancelet) protein is NADH-ubiquinone oxidoreductase chain 4 (ND4).